Consider the following 80-residue polypeptide: Serine palmitoyltransferase small subunit A-A (80 aa).

Residues 1-21 lie on the Cytoplasmic side of the membrane; the sequence is MKVLCEDVNGPRSSLGRAWSH. Residues 22-38 traverse the membrane as a helical segment; it reads MSWLYYQYLLVTALYML. The Lumenal portion of the chain corresponds to 39 to 43; it reads EPWER. Residues 44 to 66 form a helical membrane-spanning segment; the sequence is TVFNSMLVSIVGMALYTGYIFMP. Residues 67-80 are Cytoplasmic-facing; that stretch reads QHILAILHYFEIVQ.

The protein belongs to the SPTSS family. SPTSSA subfamily. In terms of assembly, component of the serine palmitoyltransferase (SPT) complex, which is composed of SPTLC1, SPTLC2 or SPTLC3 and SPTSSA or SPTSSB. The heterodimer consisting of SPTLC1 and SPTLC2/SPTLC3 forms the catalytic core of the enzyme, while SPTSSA or SPTSSB subunits determine substrate specificity. SPT also interacts with ORMDL proteins, especially ORMDL3, which negatively regulate SPT activity in the presence of ceramides.

The protein resides in the endoplasmic reticulum membrane. Its pathway is lipid metabolism; sphingolipid metabolism. Component of the serine palmitoyltransferase multisubunit enzyme (SPT) that catalyzes the initial and rate-limiting step in sphingolipid biosynthesis by condensing L-serine and activated acyl-CoA (most commonly palmitoyl-CoA) to form long-chain bases. The SPT complex is composed of SPTLC1, SPTLC2 or SPTLC3 and SPTSSA or SPTSSB. Within this complex, the heterodimer consisting of SPTLC1 and SPTLC2/SPTLC3 forms the catalytic core. Within the SPT complex, SPTSSA stimulates the catalytic activity and plays a role in substrate specificity, which depends upon the overall complex composition. The SPTLC1-SPTLC2-SPTSSA complex shows a strong preference for C16-CoA substrate, while the SPTLC1-SPTLC3-SPTSSA isozyme uses both C14-CoA and C16-CoA as substrates, with a slight preference for C14-CoA. Independently of its action as a SPT component, may be involved in MBOAT7 localization to mitochondria-associated membranes, a membrane bridge between the endoplasmic reticulum and mitochondria, may hence affect MBOAT7-catalyzed incorporation of arachidonic acid into phosphatidylinositol. The chain is Serine palmitoyltransferase small subunit A-A (sptssa-a) from Xenopus laevis (African clawed frog).